The primary structure comprises 123 residues: Small ribosomal subunit protein uS12c (123 aa).

The segment at 9–31 (RNKRQAAENKTKSPALQRSPQRR) is disordered.

This sequence belongs to the universal ribosomal protein uS12 family. As to quaternary structure, part of the 30S ribosomal subunit.

It is found in the plastid. It localises to the chloroplast. Functionally, with S4 and S5 plays an important role in translational accuracy. Located at the interface of the 30S and 50S subunits. The polypeptide is Small ribosomal subunit protein uS12c (rps12) (Spirogyra maxima (Green alga)).